Consider the following 161-residue polypeptide: Nucleotide-binding protein Sden_0770 (161 aa).

It belongs to the YajQ family.

Nucleotide-binding protein. The polypeptide is Nucleotide-binding protein Sden_0770 (Shewanella denitrificans (strain OS217 / ATCC BAA-1090 / DSM 15013)).